The primary structure comprises 153 residues: Natriuretic peptides A (153 aa).

An N-terminal signal peptide occupies residues 1-25 (MGSFSTITASFLLFLACQLLWQTGA). Propeptides lie at residues 26–123 (NPVY…AAPR) and 93–103 (DGGALGRGSWD). The interval 62–104 (VLSEQNEEAGAALSPLPEVPPWAGEVNPAQRDGGALGRGSWDS) is disordered. S129 is modified (phosphoserine). Cysteines 130 and 146 form a disulfide. The tract at residues 147–151 (NSFRY) is important for degradation of atrial natriuretic peptide by IDE.

The protein belongs to the natriuretic peptide family. As to quaternary structure, homodimer; disulfide-linked antiparallel dimer. Post-translationally, the precursor molecule is proteolytically cleaved by CORIN at Arg-123 to produce the atrial natriuretic peptide. Undergoes further proteolytic cleavage by unknown proteases to give rise to long-acting natriuretic peptide, vessel dilator and kaliuretic peptide. Additional processing gives rise to the auriculin and atriopeptin peptides. In the kidneys, alternative processing by an unknown protease results in the peptide urodilatin. In terms of processing, cleavage by MME initiates degradation of the factor and thereby regulates its activity. Degradation by IDE results in reduced activation of NPR1 (in vitro). During IDE degradation, the resulting products can temporarily stimulate NPR2 to produce cGMP, before the fragments are completely degraded and inactivated by IDE (in vitro). Degraded by IDE. Post-translationally, phosphorylation on Ser-129 decreases vasorelaxant activity.

Its subcellular location is the secreted. It is found in the perikaryon. The protein resides in the cell projection. Its function is as follows. Hormone that plays a key role in mediating cardio-renal homeostasis, and is involved in vascular remodeling and regulating energy metabolism. Acts by specifically binding and stimulating NPR1 to produce cGMP, which in turn activates effector proteins, such as PRKG1, that drive various biological responses. Regulates vasodilation, natriuresis, diuresis and aldosterone synthesis and is therefore essential for regulating blood pressure, controlling the extracellular fluid volume and maintaining the fluid-electrolyte balance. Also involved in inhibiting cardiac remodeling and cardiac hypertrophy by inducing cardiomyocyte apoptosis and attenuating the growth of cardiomyocytes and fibroblasts. Plays a role in female pregnancy by promoting trophoblast invasion and spiral artery remodeling in uterus, and thus prevents pregnancy-induced hypertension. In adipose tissue, acts in various cGMP- and PKG-dependent pathways to regulate lipid metabolism and energy homeostasis. This includes up-regulating lipid metabolism and mitochondrial oxygen utilization by activating the AMP-activated protein kinase (AMPK), and increasing energy expenditure by acting via MAPK11 to promote the UCP1-dependent thermogenesis of brown adipose tissue. Binds the clearance receptor NPR3 which removes the hormone from circulation. May have a role in cardio-renal homeostasis through regulation of natriuresis, diuresis, vasodilation, and inhibiting aldosterone synthesis. In vitro, promotes the production of cGMP and induces vasodilation. May promote natriuresis, at least in part, by enhancing prostaglandin E2 synthesis resulting in the inhibition of renal Na+-K+-ATPase. However reports on the involvement of this peptide in mammal blood volume and blood pressure homeostasis are conflicting; according to a report, in vivo it is not sufficient to activate cGMP and does not inhibit collecting duct transport nor effect diuresis and natriuresis. Appears to bind to specific receptors that are distinct from the receptors bound by atrial natriuretic peptide and vessel dilator. Possibly enhances protein excretion in urine by decreasing proximal tubular protein reabsorption. Functionally, may have a role in cardio-renal homeostasis through regulation of natriuresis, diuresis, and vasodilation. In vitro, promotes the production of cGMP and induces vasodilation. May promote natriuresis, at least in part, by enhancing prostaglandin E2 synthesis resulting in the inhibition of renal Na+-K+-ATPase. However reports on the involvement of this peptide in mammal blood volume and blood pressure homeostasis are conflicting; according to a report it is not sufficient to activate cGMP and does not inhibit collecting duct transport nor effect diuresis and natriuresis. Appears to bind to specific receptors that are distinct from the receptors bound by the atrial natriuretic and long-acting natriuretic peptides. Possibly functions in protein excretion in urine by maintaining the integrity of the proximal tubules and enhancing protein excretion by decreasing proximal tubular protein reabsorption. In terms of biological role, may have a role in cardio-renal homeostasis through regulation of diuresis and inhibiting aldosterone synthesis. In vitro, promotes the production of cGMP and induces vasodilation. May promote natriuresis, at least in part, by enhancing prostaglandin E2 synthesis resulting in the inhibition of renal Na+-K+-ATPase. May have a role in potassium excretion but not sodium excretion (natriuresis). Possibly enhances protein excretion in urine by decreasing proximal tubular protein reabsorption. Its function is as follows. Hormone produced in the kidneys that appears to be important for maintaining cardio-renal homeostasis. Mediates vasodilation, natriuresis and diuresis primarily in the renal system, in order to maintain the extracellular fluid volume and control the fluid-electrolyte balance. Specifically binds and stimulates cGMP production by renal transmembrane receptors, likely NPR1. Urodilatin not ANP, may be the natriuretic peptide responsible for the regulation of sodium and water homeostasis in the kidney. May have a role in cardio-renal homeostasis through regulation of natriuresis and vasodilation. In vivo promotes natriuresis and in vitro, vasodilates renal artery strips. Functionally, may have a role in cardio-renal homeostasis through regulation of regulation of natriuresis and vasodilation. In vivo promotes natriuresis. In vitro, vasodilates intestinal smooth muscle but not smooth muscle strips. In terms of biological role, may have a role in cardio-renal homeostasis through regulation of natriuresis and vasodilation. In vivo promotes natriuresis. In vitro, selectively vasodilates intestinal and vascular smooth muscle strips. Its function is as follows. May have a role in cardio-renal homeostasis through regulation of natriuresis and vasodilation. In vivo promotes natriuresis. In vitro, selectively vasodilates intestinal smooth muscle but not vascular smooth muscle strips. The polypeptide is Natriuretic peptides A (NPPA) (Felis catus (Cat)).